Here is a 134-residue protein sequence, read N- to C-terminus: Aspartate 1-decarboxylase (134 aa).

The active-site Schiff-base intermediate with substrate; via pyruvic acid is serine 25. Residue serine 25 is modified to Pyruvic acid (Ser). Threonine 57 lines the substrate pocket. Tyrosine 58 functions as the Proton donor in the catalytic mechanism. 73–75 (GAA) is a binding site for substrate.

It belongs to the PanD family. In terms of assembly, heterooctamer of four alpha and four beta subunits. Pyruvate is required as a cofactor. Is synthesized initially as an inactive proenzyme, which is activated by self-cleavage at a specific serine bond to produce a beta-subunit with a hydroxyl group at its C-terminus and an alpha-subunit with a pyruvoyl group at its N-terminus.

The protein resides in the cytoplasm. It catalyses the reaction L-aspartate + H(+) = beta-alanine + CO2. It functions in the pathway cofactor biosynthesis; (R)-pantothenate biosynthesis; beta-alanine from L-aspartate: step 1/1. Functionally, catalyzes the pyruvoyl-dependent decarboxylation of aspartate to produce beta-alanine. The protein is Aspartate 1-decarboxylase of Mycolicibacterium gilvum (strain PYR-GCK) (Mycobacterium gilvum (strain PYR-GCK)).